Consider the following 86-residue polypeptide: Cell division topological specificity factor (86 aa).

Belongs to the MinE family.

Functionally, prevents the cell division inhibition by proteins MinC and MinD at internal division sites while permitting inhibition at polar sites. This ensures cell division at the proper site by restricting the formation of a division septum at the midpoint of the long axis of the cell. The polypeptide is Cell division topological specificity factor (Allorhizobium ampelinum (strain ATCC BAA-846 / DSM 112012 / S4) (Agrobacterium vitis (strain S4))).